The sequence spans 513 residues: Maturase K (513 aa).

This sequence belongs to the intron maturase 2 family. MatK subfamily.

It is found in the plastid. It localises to the chloroplast. Usually encoded in the trnK tRNA gene intron. Probably assists in splicing its own and other chloroplast group II introns. The protein is Maturase K of Typha angustifolia (Narrow leaf cattail).